The sequence spans 164 residues: Vasopressin-neurophysin 2-copeptin (164 aa).

The first 19 residues, M1–A19, serve as a signal peptide directing secretion. C20 and C25 form a disulfide bridge. G28 is subject to Glycine amide. Intrachain disulfides connect C41/C85, C44/C58, C52/C75, C59/C65, C92/C104, C98/C116, and C105/C110. An N-linked (GlcNAc...) asparagine glycan is attached at N131.

Belongs to the vasopressin/oxytocin family. In terms of assembly, interacts with vasopressin receptors V1bR/AVPR1B (Ki=85 pM), V1aR/AVPR1A (Ki=0.6 nM) and V2R/AVPR2 (Ki=4.9 nM). Interacts with oxytocin receptor (OXTR) (Ki=110 nM). As to quaternary structure, (Microbial infection) May interact with SARS coronavirus-2/SARS-CoV-2; they may form a complex with secreted ACE2.

Its subcellular location is the secreted. Functionally, specifically binds vasopressin. In terms of biological role, has a direct antidiuretic action on the kidney, it also causes vasoconstriction of the peripheral vessels. Acts by binding to vasopressin receptors (V1bR/AVPR1B, V1aR/AVPR1A, and V2R/AVPR2). This chain is Vasopressin-neurophysin 2-copeptin (AVP), found in Homo sapiens (Human).